We begin with the raw amino-acid sequence, 457 residues long: MVVLNPMTLGIYLQLFFCSIVSQPTFINSVVPISAALPGLDQKKRGSHKACCLLMPPPPPLFPPPFFRGSRSPLLSPDMKNLLELEASPSPCIQGSLGSPGPPGPQGPPGLPGKTGPKGEKGDLGRPGRKGRPGPPGVPGMPGPVGWPGPEGPRGEKGDLGMMGLPGSRGPMGSKGFPGSRGEKGSRGERGDLGPKGEKGFPGFPGMLGQKGEMGPKGESGLAGHRGPTGRPGKRGKQGQKGDSGIMGPPGKPGPSGQPGRQGPPGPPGPPSAGQLVMGLKGERGFPGPPGRCLCGPPVNVNNPSYGDSMYGRGSPRVPAIFVVNNQEELERLNTQNAIAFRRDQRSLYFKDSLGWLPIQLTPFYPVGYTVKQPGTCGDGVLQPGEECDDGNPDVSDGCIDCHRAYCGDGYRHQGVEDCDGSDFGYLTCETYLPGSYGDLRCTQYCSIDSTPCRYFT.

Residues 1-29 (MVVLNPMTLGIYLQLFFCSIVSQPTFINS) form the signal peptide. The segment at 51–67 (CCLLMPPPPPLFPPPFF) is PRAD. Residues 89–289 (PSPCIQGSLG…LKGERGFPGP (201 aa)) are disordered. Collagen-like domains lie at 95–154 (GSLG…EGPR) and 158–271 (GDLG…PGPP). A compositionally biased stretch (pro residues) spans 100–111 (PGPPGPQGPPGL). Positions 117–126 (PKGEKGDLGR) are enriched in basic and acidic residues. The heparan sulfate proteoglycan binding stretch occupies residues 129–132 (RKGR). Positions 133-151 (PGPPGVPGMPGPVGWPGPE) are enriched in pro residues. Basic and acidic residues predominate over residues 181-199 (RGEKGSRGERGDLGPKGEK). The interval 234–237 (KRGK) is heparan sulfate proteoglycan binding. Over residues 262-271 (QGPPGPPGPP) the composition is skewed to pro residues.

Belongs to the COLQ family. Homotrimer. Component of the asymmetric form of AChE, a disulfide-bonded oligomer composed of the collagenic subunits (Q) and a variable number of asymmetric catalytic subunits (T). The N-terminal of a collagenic subunit (Q) associates with the C-terminal of a catalytic subunit (T). The triple-helical tail is stabilized by disulfide bonds at each end.

Its subcellular location is the synapse. Anchors the catalytic subunits of asymmetric AChE to the synaptic basal lamina. In Mus musculus (Mouse), this protein is Acetylcholinesterase collagenic tail peptide (Colq).